The chain runs to 291 residues: Protease HtpX homolog (291 aa).

A run of 2 helical transmembrane segments spans residues Ile4–Leu24 and Leu38–Leu58. His144 lines the Zn(2+) pocket. Glu145 is a catalytic residue. His148 is a binding site for Zn(2+). The next 2 membrane-spanning stretches (helical) occupy residues Leu159–Ile179 and Val197–Phe217. A Zn(2+)-binding site is contributed by Glu222.

It belongs to the peptidase M48B family. Zn(2+) is required as a cofactor.

It is found in the cell inner membrane. This Leptothrix cholodnii (strain ATCC 51168 / LMG 8142 / SP-6) (Leptothrix discophora (strain SP-6)) protein is Protease HtpX homolog.